Reading from the N-terminus, the 156-residue chain is Cyclic pyranopterin monophosphate synthase (156 aa).

Substrate-binding positions include 73–75 (LCH) and 110–111 (ME). Asp125 is a catalytic residue.

This sequence belongs to the MoaC family. Homohexamer; trimer of dimers.

The catalysed reaction is (8S)-3',8-cyclo-7,8-dihydroguanosine 5'-triphosphate = cyclic pyranopterin phosphate + diphosphate. It participates in cofactor biosynthesis; molybdopterin biosynthesis. Catalyzes the conversion of (8S)-3',8-cyclo-7,8-dihydroguanosine 5'-triphosphate to cyclic pyranopterin monophosphate (cPMP). The sequence is that of Cyclic pyranopterin monophosphate synthase from Pseudomonas putida (strain W619).